The following is a 183-amino-acid chain: RFKKIRRLGALPGLTSKRPRSGSDLKNQLRSGKRSQYRIRLEEKQKLRFHYGLTERQLLKYVHIAGKAKGSTGQILLQLLEMRLDNILFRLGMASTIPGARQLVNHRHILVNGRIVDIPSYRCKPRDIITTKNKQRSKALIQNFIASSPQQEELPNHLTIDPFQYKGLVNQIIDSKWIGLKIN.

Residues 82-143 (MRLDNILFRL…KQRSKALIQN (62 aa)) enclose the S4 RNA-binding domain.

This sequence belongs to the universal ribosomal protein uS4 family. As to quaternary structure, part of the 30S ribosomal subunit. Contacts protein S5. The interaction surface between S4 and S5 is involved in control of translational fidelity.

It is found in the plastid. The protein localises to the chloroplast. Its function is as follows. One of the primary rRNA binding proteins, it binds directly to 16S rRNA where it nucleates assembly of the body of the 30S subunit. Functionally, with S5 and S12 plays an important role in translational accuracy. The protein is Small ribosomal subunit protein uS4c (rps4) of Schizorhiza neglecta (Lapeirousia neglecta).